A 338-amino-acid polypeptide reads, in one-letter code: Tetraacyldisaccharide 4'-kinase (338 aa).

An ATP-binding site is contributed by 61–68 (TLGGTGKT).

The protein belongs to the LpxK family.

The catalysed reaction is a lipid A disaccharide + ATP = a lipid IVA + ADP + H(+). Its pathway is glycolipid biosynthesis; lipid IV(A) biosynthesis; lipid IV(A) from (3R)-3-hydroxytetradecanoyl-[acyl-carrier-protein] and UDP-N-acetyl-alpha-D-glucosamine: step 6/6. Transfers the gamma-phosphate of ATP to the 4'-position of a tetraacyldisaccharide 1-phosphate intermediate (termed DS-1-P) to form tetraacyldisaccharide 1,4'-bis-phosphate (lipid IVA). This chain is Tetraacyldisaccharide 4'-kinase, found in Nitrosococcus oceani (strain ATCC 19707 / BCRC 17464 / JCM 30415 / NCIMB 11848 / C-107).